The sequence spans 278 residues: Tryptophan synthase alpha chain (278 aa).

Catalysis depends on proton acceptor residues Glu-49 and Asp-60.

This sequence belongs to the TrpA family. In terms of assembly, tetramer of two alpha and two beta chains.

It catalyses the reaction (1S,2R)-1-C-(indol-3-yl)glycerol 3-phosphate + L-serine = D-glyceraldehyde 3-phosphate + L-tryptophan + H2O. It participates in amino-acid biosynthesis; L-tryptophan biosynthesis; L-tryptophan from chorismate: step 5/5. Functionally, the alpha subunit is responsible for the aldol cleavage of indoleglycerol phosphate to indole and glyceraldehyde 3-phosphate. This chain is Tryptophan synthase alpha chain, found in Granulibacter bethesdensis (strain ATCC BAA-1260 / CGDNIH1).